Here is a 237-residue protein sequence, read N- to C-terminus: Phosphoserine phosphatase (237 aa).

The Nucleophile role is filled by Asp-39. Mg(2+) is bound by residues Asp-39 and Glu-41. Glu-41 functions as the Proton donor in the catalytic mechanism. Substrate contacts are provided by residues Glu-47, Arg-78, 122-123, and Lys-165; that span reads SD. Asp-184 is a Mg(2+) binding site. A substrate-binding site is contributed by Asn-187.

The protein belongs to the thrH family. The cofactor is Mg(2+).

It catalyses the reaction O-phospho-L-serine + H2O = L-serine + phosphate. The catalysed reaction is O-phospho-D-serine + H2O = D-serine + phosphate. The protein operates within amino-acid biosynthesis; L-serine biosynthesis; L-serine from 3-phospho-D-glycerate: step 3/3. Functionally, phosphoserine phosphatase that mediates dephosphorylation of phosphoserine in the serine biosynthesis pathway. Also able to dephosphorylate phospho-threonine. The polypeptide is Phosphoserine phosphatase (Pseudomonas syringae pv. tomato (strain ATCC BAA-871 / DC3000)).